A 124-amino-acid chain; its full sequence is Small ribosomal subunit protein uS13 (124 aa).

Residues 98 to 124 (VRGQRTKTNARTRKGPKRTIAGKKKAR) form a disordered region.

The protein belongs to the universal ribosomal protein uS13 family. As to quaternary structure, part of the 30S ribosomal subunit. Forms a loose heterodimer with protein S19. Forms two bridges to the 50S subunit in the 70S ribosome.

In terms of biological role, located at the top of the head of the 30S subunit, it contacts several helices of the 16S rRNA. In the 70S ribosome it contacts the 23S rRNA (bridge B1a) and protein L5 of the 50S subunit (bridge B1b), connecting the 2 subunits; these bridges are implicated in subunit movement. Contacts the tRNAs in the A and P-sites. The chain is Small ribosomal subunit protein uS13 from Mycobacterium leprae (strain Br4923).